We begin with the raw amino-acid sequence, 445 residues long: Histamine H3 receptor (445 aa).

The Extracellular portion of the chain corresponds to 1 to 39 (MERAPPDGLMNASGTLAGEAAAAGGARGFSAAWTAVLAA). Residue Asn11 is glycosylated (N-linked (GlcNAc...) asparagine). A helical membrane pass occupies residues 40–60 (LMALLIVATVLGNALVMLAFV). The Cytoplasmic segment spans residues 61 to 70 (ADSSLRTQNN). The chain crosses the membrane as a helical span at residues 71–91 (FFLLNLAISDFLVGAFCIPLY). The Extracellular segment spans residues 92–108 (VPYVLTGRWTFGRGLCK). The cysteines at positions 107 and 188 are disulfide-linked. A helical membrane pass occupies residues 109–129 (LWLVVDYLLCASSVFNIVLIS). Residues 130-156 (YDRFLSVTRAVSYRAQQGDTRRAVRKM) are Cytoplasmic-facing. A helical transmembrane segment spans residues 157–177 (ALVWVLAFLLYGPAILSWEYL). Topologically, residues 178-196 (SGGSSIPEGHCYAEFFYNW) are extracellular. A helical transmembrane segment spans residues 197-217 (YFLITASTLEFFTPFLSVTFF). The Cytoplasmic segment spans residues 218 to 359 (NLSIYLNIQR…LSRDKKVAKS (142 aa)). 2 disordered regions span residues 234–259 (DGGR…PSCW) and 286–336 (AGEA…LEKR). Over residues 241 to 256 (PEPPPDAQPSPPPAPP) the composition is skewed to pro residues. A compositionally biased stretch (gly residues) spans 290–299 (ALGGGSGGGA). The span at 300–312 (AASPTSSSGSSSR) shows a compositional bias: low complexity. The chain crosses the membrane as a helical span at residues 360 to 380 (LAIIVSIFGLCWAPYTLLMII). At 381 to 396 (RAACHGRCIPDYWYET) the chain is on the extracellular side. The chain crosses the membrane as a helical span at residues 397–417 (SFWLLWANSAVNPVLYPLCHY). Residues 418-445 (SFRRAFTKLLCPQKLKVQPHGSLEQCWK) are Cytoplasmic-facing. Ser439 carries the post-translational modification Phosphoserine.

Belongs to the G-protein coupled receptor 1 family. In terms of tissue distribution, expressed abundantly in brain, most notably throughout the thalamus, the ventromedial hypothalamus and the caudate nucleus. Isoform 1 is largely predominant in all tissues.

The protein localises to the cell membrane. The H3 subclass of histamine receptors could mediate the histamine signals in CNS and peripheral nervous system. Signals through the inhibition of adenylate cyclase and displays high constitutive activity (spontaneous activity in the absence of agonist). This Rattus norvegicus (Rat) protein is Histamine H3 receptor (Hrh3).